A 202-amino-acid chain; its full sequence is Small ribosomal subunit protein uS4c (202 aa).

The region spanning 90–153 (MRLDNVIFRL…KSETIISKNI (64 aa)) is the S4 RNA-binding domain.

It belongs to the universal ribosomal protein uS4 family. Part of the 30S ribosomal subunit. Contacts protein S5. The interaction surface between S4 and S5 is involved in control of translational fidelity.

It localises to the plastid. Its subcellular location is the chloroplast. Functionally, one of the primary rRNA binding proteins, it binds directly to 16S rRNA where it nucleates assembly of the body of the 30S subunit. In terms of biological role, with S5 and S12 plays an important role in translational accuracy. This Sphaerocarpos donnelli (Liverwort) protein is Small ribosomal subunit protein uS4c (rps4).